Consider the following 244-residue polypeptide: Pyridoxine 5'-phosphate synthase (244 aa).

Residue Asn12 coordinates 3-amino-2-oxopropyl phosphate. 14–15 (DH) serves as a coordination point for 1-deoxy-D-xylulose 5-phosphate. Residue Arg23 coordinates 3-amino-2-oxopropyl phosphate. The active-site Proton acceptor is His48. Arg50 and His55 together coordinate 1-deoxy-D-xylulose 5-phosphate. The active-site Proton acceptor is Glu75. 1-deoxy-D-xylulose 5-phosphate is bound at residue Thr105. The active-site Proton donor is the His196. 3-amino-2-oxopropyl phosphate is bound by residues Gly197 and 218-219 (GH).

It belongs to the PNP synthase family. Homooctamer; tetramer of dimers.

Its subcellular location is the cytoplasm. It carries out the reaction 3-amino-2-oxopropyl phosphate + 1-deoxy-D-xylulose 5-phosphate = pyridoxine 5'-phosphate + phosphate + 2 H2O + H(+). Its pathway is cofactor biosynthesis; pyridoxine 5'-phosphate biosynthesis; pyridoxine 5'-phosphate from D-erythrose 4-phosphate: step 5/5. In terms of biological role, catalyzes the complicated ring closure reaction between the two acyclic compounds 1-deoxy-D-xylulose-5-phosphate (DXP) and 3-amino-2-oxopropyl phosphate (1-amino-acetone-3-phosphate or AAP) to form pyridoxine 5'-phosphate (PNP) and inorganic phosphate. The polypeptide is Pyridoxine 5'-phosphate synthase (Alcanivorax borkumensis (strain ATCC 700651 / DSM 11573 / NCIMB 13689 / SK2)).